A 107-amino-acid chain; its full sequence is Translation initiation factor IF-1, chloroplastic (107 aa).

Residues 8–83 form the S1-like domain; that stretch reads REKKNPREAK…SKGRIIYRLP (76 aa). The disordered stretch occupies residues 81 to 107; it reads RLPHKDSKRTEDSKDTEDLKDTKDSKG. The segment covering 83–107 has biased composition (basic and acidic residues); it reads PHKDSKRTEDSKDTEDLKDTKDSKG.

Belongs to the IF-1 family. In terms of assembly, component of the 30S ribosomal translation pre-initiation complex which assembles on the 30S ribosome in the order IF-2 and IF-3, IF-1 and N-formylmethionyl-tRNA(fMet); mRNA recruitment can occur at any time during PIC assembly.

The protein resides in the plastid. It localises to the chloroplast. Functionally, one of the essential components for the initiation of protein synthesis. Stabilizes the binding of IF-2 and IF-3 on the 30S subunit to which N-formylmethionyl-tRNA(fMet) subsequently binds. Helps modulate mRNA selection, yielding the 30S pre-initiation complex (PIC). Upon addition of the 50S ribosomal subunit IF-1, IF-2 and IF-3 are released leaving the mature 70S translation initiation complex. This Oryza sativa subsp. indica (Rice) protein is Translation initiation factor IF-1, chloroplastic.